Here is a 200-residue protein sequence, read N- to C-terminus: Small ribosomal subunit protein uS4c (200 aa).

A disordered region spans residues 20 to 42 (GLTRKTTTRTSRPGQHGTQARKP). Over residues 23 to 37 (RKTTTRTSRPGQHGT) the composition is skewed to polar residues. The 63-residue stretch at 90 to 152 (MRLDNVIFRL…PKSQSIVKNY (63 aa)) folds into the S4 RNA-binding domain.

This sequence belongs to the universal ribosomal protein uS4 family. In terms of assembly, part of the 30S ribosomal subunit. Contacts protein S5. The interaction surface between S4 and S5 is involved in control of translational fidelity.

It localises to the plastid. The protein localises to the chloroplast. One of the primary rRNA binding proteins, it binds directly to 16S rRNA where it nucleates assembly of the body of the 30S subunit. Its function is as follows. With S5 and S12 plays an important role in translational accuracy. This Guillardia theta (Cryptophyte) protein is Small ribosomal subunit protein uS4c (rps4).